Reading from the N-terminus, the 682-residue chain is MAQRLHLLLLLFLICFVNLISFSSQQDLSFIYNGFNQDQTNLNLDGSAKFLQDGLLQLTNATTQQKGHAFFNRPFEFGSASSQSPSFSTHFVCALVPKPGVDGGHGIAFVLSSSMDLTQADPTQYLGLFNISTNGSPSSHLLAIELDTVQSAEFDDRDKNHVGIDENSLQSVESASASYYSDKEGKNKSLKLLSGDPIQVWIDYEDTLLNVTLAPLKTQKPSKPLLSITINLTAIFPDRKAFIGFSAATGSLISYQYILGWSFSRNRALLQSLDISKLPTVPRPKKPEKTSPLLIVLLIILAIIVMVVVGGFYLYRRKKYAEVREPWEKPYGPLRYSYKSLYKATRGFNKDGRLGRGGFGEVYKGTLPILGDIAVKRLSHDAEQGMKQFVAEVVTMGSLQHKNLVPLLGYCRRKGELLLVSKYMEGGSVDQYLFHGDKPPLSWSQRVSILRDIASALCYLHTGASQVVLHRDIKASNVMLNGNLQGFLGDFGMARFDDHGSNLSATAAVGTIGYMALELTSTGTSTRTDVYAFGAFMLEVTCGRRPFDPAMPVEKRHLVKWVCECWREGSLVNAVDTRLRGKFVPGEVEMVLKLGLLCTSIIPEARPNMEQVVQYINRHQRLPEFSPNTPGIGVSTPVLMGLPSLAITSSSVTSSVSGPSASPSSANNSMFISHTIIYGDGR.

The N-terminal stretch at Met-1–Leu-19 is a signal peptide. The Extracellular segment spans residues Ile-20–Pro-292. Residues Asp-27–Ser-264 form a legume-lectin like region. N-linked (GlcNAc...) asparagine glycosylation is found at Asn-60, Asn-130, Asn-187, Asn-210, and Asn-231. The chain crosses the membrane as a helical span at residues Leu-293 to Tyr-313. Over Leu-314–Arg-682 the chain is Cytoplasmic. The Protein kinase domain occupies Phe-348 to Leu-622. Residues Leu-354 to Val-362 and Lys-376 contribute to the ATP site. The active-site Proton acceptor is the Asp-472.

This sequence in the C-terminal section; belongs to the protein kinase superfamily. Ser/Thr protein kinase family. In the N-terminal section; belongs to the leguminous lectin family.

It localises to the cell membrane. The enzyme catalyses L-seryl-[protein] + ATP = O-phospho-L-seryl-[protein] + ADP + H(+). The catalysed reaction is L-threonyl-[protein] + ATP = O-phospho-L-threonyl-[protein] + ADP + H(+). Involved in resistance response to the pathogenic fungus Alternaria brassicicola. The chain is Putative L-type lectin-domain containing receptor kinase I.1 from Arabidopsis thaliana (Mouse-ear cress).